A 255-amino-acid polypeptide reads, in one-letter code: Imidazole glycerol phosphate synthase subunit HisF (255 aa).

Residues D11 and D130 contribute to the active site.

Belongs to the HisA/HisF family. As to quaternary structure, heterodimer of HisH and HisF.

It is found in the cytoplasm. It catalyses the reaction 5-[(5-phospho-1-deoxy-D-ribulos-1-ylimino)methylamino]-1-(5-phospho-beta-D-ribosyl)imidazole-4-carboxamide + L-glutamine = D-erythro-1-(imidazol-4-yl)glycerol 3-phosphate + 5-amino-1-(5-phospho-beta-D-ribosyl)imidazole-4-carboxamide + L-glutamate + H(+). Its pathway is amino-acid biosynthesis; L-histidine biosynthesis; L-histidine from 5-phospho-alpha-D-ribose 1-diphosphate: step 5/9. IGPS catalyzes the conversion of PRFAR and glutamine to IGP, AICAR and glutamate. The HisF subunit catalyzes the cyclization activity that produces IGP and AICAR from PRFAR using the ammonia provided by the HisH subunit. The chain is Imidazole glycerol phosphate synthase subunit HisF from Synechococcus sp. (strain ATCC 27144 / PCC 6301 / SAUG 1402/1) (Anacystis nidulans).